The chain runs to 188 residues: Putative manganese efflux pump MntP (188 aa).

The next 6 helical transmembrane spans lie at 3 to 23 (ITATVLLAFGMSMDAFAASIG), 41 to 61 (LIFGAVETLTPLIGWGLGMLA), 66 to 86 (LEWNHWVAFILLVFLGIRMII), 107 to 129 (LLVTTAIATSLDAMAVGVGLAFL), 143 to 163 (ATLIMSTLGIMVGRFIGPLLG), and 168 to 188 (ILGGAVLIGIGAQILWTHFHG).

It belongs to the MntP (TC 9.B.29) family.

Its subcellular location is the cell inner membrane. Functionally, probably functions as a manganese efflux pump. This Citrobacter koseri (strain ATCC BAA-895 / CDC 4225-83 / SGSC4696) protein is Putative manganese efflux pump MntP.